The chain runs to 643 residues: E3 ubiquitin-protein ligase AMFR (643 aa).

The disordered stretch occupies residues 39 to 67 (PEAGPGEPDQLTASLQPEPPAPARPSAGG). Transmembrane regions (helical) follow at residues 82–102 (LFVWVLVNTACCVLMLVAKLI), 122–142 (FWNFIFYKFIFIFGVLNVQTV), 145–165 (VVMWCLWFAGLVFLHLMVQLC), 186–206 (VLSLLVAMLLSCCGLAAVCSI), 215–235 (TLAFMAAESLLVTVRTAHVIL), and 276–296 (HIHMLLFGNIWLSMASLVIFM). Residues 341 to 379 (CAICWDSMQAARKLPCGHLFHNSCLRSWLEQDTSCPTCR) form an RING-type zinc finger. Residues 429-449 (IASWLPSFSVEVMHTTNILGI) traverse the membrane as a helical segment. In terms of domain architecture, CUE spans 456-498 (QLNAMAHQIQEMFPQVPYHLVLQDLQLTRSVEITTDNILEGRI). Disordered stretches follow at residues 504-579 (TQRS…DERQ) and 596-624 (RFLNKSSEDDAASESFLPSEGASSDPVTL). 3 positions are modified to phosphoserine: Ser-516, Ser-523, and Ser-542. Residues 548–563 (TLDFGEVEVEPSEVED) show a composition bias toward acidic residues. Residues 564–579 (FEARGSRFSKSADERQ) show a composition bias toward basic and acidic residues. Residues 622-640 (VTLRRRMLAAAAERRLQKQ) are VCP/p97-interacting motif (VIM).

In terms of assembly, interacts with RNF5. Also forms an ERAD complex containing VCP/p97, NGLY1; PSMC1; SAKS1 and RAD23B required for coupling retrotranslocation, ubiquitination and deglycosylation. Interacts with DERL1. Interacts (through a region distinct from the RING finger) with UBE2G2/UBC7. Component of the VCP/p97-AMFR/gp78 complex that enhances VCP/p97 binding to polyubiquitinated proteins for their degradation by the endoplasmic reticulum-associated degradation (ERAD) pathway. Interacts (via the VIM) with VCP/p97. Interacts (via its membrane domain) with INSIG1; the interaction initiates the sterol-mediated ubiquitination and degradation of HMGCR by the ERAD pathway. Interacts with AUP1, UBE2G2 and RNF139/TRC8; interaction with AUP1 facilitates interaction of AMFR with ubiquitin-conjugating enzyme UBE2G2 and ubiquitin ligase RNF139, leading to sterol-induced ubiquitination of HMGCR and its subsequent proteasomal degradation. Interacts with BAG6. Interacts with USP13 (via UBA 2 domain); the interaction is direct. Interacts with LMBR1L. Interacts with UBAC2 and CTNNB1. Interacts with C18orf32. As to quaternary structure, (Microbial infection) Interacts with Staphylococcus aureus HIgB; this interaction regulates AMFR-mediated inflammation by promoting TAB3 ubiquitination to promote TAB3-TAK1 complex formation. Palmitoylation of the RING-type zing finger by ZDHHC6 promotes localization to the peripheral endoplasmic reticulum. In terms of tissue distribution, widely expressed.

The protein resides in the endoplasmic reticulum membrane. It catalyses the reaction [E2 ubiquitin-conjugating enzyme]-S-ubiquitinyl-L-cysteine + [acceptor protein]-L-cysteine = [E2 ubiquitin-conjugating enzyme]-L-cysteine + [acceptor protein]-S-ubiquitinyl-L-cysteine.. The protein operates within protein modification; protein ubiquitination. In terms of biological role, E3 ubiquitin-protein ligase that mediates the polyubiquitination of lysine and cysteine residues on target proteins, such as CD3D, CYP3A4, CFTR, INSIG1, SOAT2/ACAT2 and APOB for proteasomal degradation. Component of a VCP/p97-AMFR/gp78 complex that participates in the final step of endoplasmic reticulum-associated degradation (ERAD). The VCP/p97-AMFR/gp78 complex is involved in the sterol-accelerated ERAD degradation of HMGCR through binding to the HMGCR-INSIG1 complex at the ER membrane. In addition, interaction of AMFR with AUP1 facilitates interaction of AMFR with ubiquitin-conjugating enzyme UBE2G2 and ubiquitin ligase RNF139, leading to sterol-induced HMGCR ubiquitination. The ubiquitinated HMGCR is then released from the ER into the cytosol for subsequent destruction. In addition to ubiquitination on lysine residues, catalyzes ubiquitination on cysteine residues: together with INSIG1, mediates polyubiquitination of SOAT2/ACAT2 at 'Cys-277', leading to its degradation when the lipid levels are low. Catalyzes ubiquitination and subsequent degradation of INSIG1 when cells are depleted of sterols. Mediates polyubiquitination of INSIG2 at 'Cys-215' in some tissues, leading to its degradation. Also regulates ERAD through the ubiquitination of UBL4A a component of the BAG6/BAT3 complex. Also acts as a scaffold protein to assemble a complex that couples ubiquitination, retranslocation and deglycosylation. Mediates tumor invasion and metastasis as a receptor for the GPI/autocrine motility factor. In association with LMBR1L and UBAC2, negatively regulates the canonical Wnt signaling pathway in the lymphocytes by promoting the ubiquitin-mediated degradation of CTNNB1 and Wnt receptors FZD6 and LRP6. Regulates NF-kappa-B and MAPK signaling pathways by mediating 'Lys-27'-linked polyubiquitination of TAB3 and promoting subsequent TAK1/MAP3K7 activation. Required for proper lipid homeostasis. The sequence is that of E3 ubiquitin-protein ligase AMFR from Homo sapiens (Human).